Here is a 603-residue protein sequence, read N- to C-terminus: NADH-ubiquinone oxidoreductase chain 5 (603 aa).

17 consecutive transmembrane segments (helical) span residues 4–24, 38–58, 87–107, 114–134, 140–160, 171–191, 210–230, 241–261, 272–292, 301–320, 325–347, 370–390, 407–429, 457–477, 482–502, 537–557, and 582–602; these read YATM…TTFI, SIVA…LCLD, MMFI…SLWY, INQF…LVTA, LFIG…WWYA, AILY…WFLL, LIPL…LGLH, TPVS…FLLI, LAQT…AVCA, IVAF…IGIG, AFLH…GSII, STSL…TGFY, WALS…MILL, LTIG…PTSV, IPLY…LTAL, IPYL…DLIW, and GLIK…LLLI.

The protein belongs to the complex I subunit 5 family. As to quaternary structure, core subunit of respiratory chain NADH dehydrogenase (Complex I) which is composed of 45 different subunits.

The protein localises to the mitochondrion inner membrane. The catalysed reaction is a ubiquinone + NADH + 5 H(+)(in) = a ubiquinol + NAD(+) + 4 H(+)(out). Functionally, core subunit of the mitochondrial membrane respiratory chain NADH dehydrogenase (Complex I) which catalyzes electron transfer from NADH through the respiratory chain, using ubiquinone as an electron acceptor. Essential for the catalytic activity and assembly of complex I. The sequence is that of NADH-ubiquinone oxidoreductase chain 5 (MT-ND5) from Gorilla gorilla gorilla (Western lowland gorilla).